The chain runs to 219 residues: 2-hydroxy-3-keto-5-methylthiopentenyl-1-phosphate phosphatase (219 aa).

Belongs to the HAD-like hydrolase superfamily. MtnX family.

The enzyme catalyses 2-hydroxy-5-methylsulfanyl-3-oxopent-1-enyl phosphate + H2O = 1,2-dihydroxy-5-(methylsulfanyl)pent-1-en-3-one + phosphate. It functions in the pathway amino-acid biosynthesis; L-methionine biosynthesis via salvage pathway; L-methionine from S-methyl-5-thio-alpha-D-ribose 1-phosphate: step 4/6. Functionally, dephosphorylates 2-hydroxy-3-keto-5-methylthiopentenyl-1-phosphate (HK-MTPenyl-1-P) yielding 1,2-dihydroxy-3-keto-5-methylthiopentene (DHK-MTPene). This Bacillus thuringiensis (strain Al Hakam) protein is 2-hydroxy-3-keto-5-methylthiopentenyl-1-phosphate phosphatase.